Reading from the N-terminus, the 77-residue chain is Metallocarboxypeptidase inhibitor (77 aa).

A signal peptide spans 1–32; sequence MAQKFTILFTILLVVIAAQDVMAQDATLTKLF. Glutamine 33 is subject to Pyrrolidone carboxylic acid. 3 disulfide bridges follow: cysteine 39/cysteine 55, cysteine 43/cysteine 58, and cysteine 49/cysteine 65. The propeptide at 70–77 is hydrophobic peptide; it reads GRAMAIGV.

The protein to potato MCPI. As to expression, ovaries.

Functionally, may play a defensive role against insect attacks. The chain is Metallocarboxypeptidase inhibitor from Solanum lycopersicum (Tomato).